Here is a 200-residue protein sequence, read N- to C-terminus: 3-isopropylmalate dehydratase small subunit (200 aa).

The protein belongs to the LeuD family. LeuD type 1 subfamily. As to quaternary structure, heterodimer of LeuC and LeuD.

The catalysed reaction is (2R,3S)-3-isopropylmalate = (2S)-2-isopropylmalate. The protein operates within amino-acid biosynthesis; L-leucine biosynthesis; L-leucine from 3-methyl-2-oxobutanoate: step 2/4. In terms of biological role, catalyzes the isomerization between 2-isopropylmalate and 3-isopropylmalate, via the formation of 2-isopropylmaleate. The protein is 3-isopropylmalate dehydratase small subunit of Arthrobacter sp. (strain FB24).